The following is a 308-amino-acid chain: HTH-type transcriptional activator AllS (308 aa).

The 58-residue stretch at phenylalanine 2–threonine 59 folds into the HTH lysR-type domain. A DNA-binding region (H-T-H motif) is located at residues phenylalanine 19 to lysine 38.

The protein belongs to the LysR transcriptional regulatory family.

Positive regulator essential for the expression of allD operon. Binds to the allD promoter. The protein is HTH-type transcriptional activator AllS (allS) of Escherichia coli O1:K1 / APEC.